Consider the following 625-residue polypeptide: Chaperone protein DnaK (625 aa).

A Phosphothreonine; by autocatalysis modification is found at T197. The tract at residues 598–625 (MYKKDDNASGEQSGGKKKDDDVIDAEVE) is disordered.

It belongs to the heat shock protein 70 family.

Its function is as follows. Acts as a chaperone. In Campylobacter curvus (strain 525.92), this protein is Chaperone protein DnaK.